A 406-amino-acid chain; its full sequence is Peptidase T (406 aa).

Histidine 82 provides a ligand contact to Zn(2+). Aspartate 84 is an active-site residue. Aspartate 142 is a binding site for Zn(2+). Residue glutamate 176 is the Proton acceptor of the active site. The Zn(2+) site is built by glutamate 177, aspartate 199, and histidine 381.

Belongs to the peptidase M20B family. The cofactor is Zn(2+).

It is found in the cytoplasm. It carries out the reaction Release of the N-terminal residue from a tripeptide.. Functionally, cleaves the N-terminal amino acid of tripeptides. The polypeptide is Peptidase T (Streptococcus agalactiae serotype III (strain NEM316)).